Reading from the N-terminus, the 72-residue chain is uncharacterized protein (72 aa).

Its subcellular location is the cytoplasm. The protein localises to the nucleus. This is an uncharacterized protein from Saccharomyces cerevisiae (strain ATCC 204508 / S288c) (Baker's yeast).